The following is a 206-amino-acid chain: MKLDIKTLDGAGAGSVELNEEIFGLEPRADLLQRMVRWQLAKRRAGTHAVQNRSDVNRTRKKLYKQKGTGNARHGAASAPQFRGGGRAFGPVVRDHSHDLPKKVRALALRHALSSKAKASTLIVVDDIKIEDHKTKGLIERFGKMGLSNALIIGGAEVDVNFGRAARAIPQIDVLPVQGINVYDILRRDTLVLTKAAVDALEERFK.

Belongs to the universal ribosomal protein uL4 family. As to quaternary structure, part of the 50S ribosomal subunit.

One of the primary rRNA binding proteins, this protein initially binds near the 5'-end of the 23S rRNA. It is important during the early stages of 50S assembly. It makes multiple contacts with different domains of the 23S rRNA in the assembled 50S subunit and ribosome. Its function is as follows. Forms part of the polypeptide exit tunnel. This Methylobacterium radiotolerans (strain ATCC 27329 / DSM 1819 / JCM 2831 / NBRC 15690 / NCIMB 10815 / 0-1) protein is Large ribosomal subunit protein uL4.